The sequence spans 671 residues: DNA ligase (671 aa).

Residues 32–36 (DAEYD), 81–82 (SL), and glutamate 113 contribute to the NAD(+) site. Lysine 115 serves as the catalytic N6-AMP-lysine intermediate. Residues arginine 136, glutamate 173, lysine 290, and lysine 314 each coordinate NAD(+). Zn(2+)-binding residues include cysteine 408, cysteine 411, cysteine 426, and cysteine 432. The 79-residue stretch at 593 to 671 (EIDSPFAGKT…EAEMLRLFGE (79 aa)) folds into the BRCT domain.

This sequence belongs to the NAD-dependent DNA ligase family. LigA subfamily. Mg(2+) serves as cofactor. Requires Mn(2+) as cofactor.

It catalyses the reaction NAD(+) + (deoxyribonucleotide)n-3'-hydroxyl + 5'-phospho-(deoxyribonucleotide)m = (deoxyribonucleotide)n+m + AMP + beta-nicotinamide D-nucleotide.. Its function is as follows. DNA ligase that catalyzes the formation of phosphodiester linkages between 5'-phosphoryl and 3'-hydroxyl groups in double-stranded DNA using NAD as a coenzyme and as the energy source for the reaction. It is essential for DNA replication and repair of damaged DNA. The polypeptide is DNA ligase (Enterobacter sp. (strain 638)).